We begin with the raw amino-acid sequence, 505 residues long: Protein amnionless (505 aa).

The signal sequence occupies residues 1-20 (MGLHWQWLIWALVGLHVALA). Over 21–344 (TKWYGGGMDF…RPYNPNVSFS (324 aa)) the chain is Extracellular. A helical transmembrane segment spans residues 345 to 365 (SIVLILFCMALVGLVSVVILA). The Cytoplasmic segment spans residues 366–505 (HFMPENPYLN…CEADTDEETI (140 aa)). The interval 451 to 482 (GALEEAAKESQEQDEILSVPKMETGDLDARSV) is disordered. Basic and acidic residues predominate over residues 473–482 (ETGDLDARSV).

In terms of tissue distribution, specifically expressed in nephrocytes.

The protein localises to the cell membrane. Required in the nephrocyte for normal uptake of proteins and elimination of toxins, and for maintenance of endocytic trafficking structures. May function together with Cubn. The polypeptide is Protein amnionless (Drosophila melanogaster (Fruit fly)).